We begin with the raw amino-acid sequence, 318 residues long: 1-aminocyclopropane-1-carboxylate oxidase (318 aa).

Positions 151 to 251 (PTFGTKVSNY…RMSIASFYNP (101 aa)) constitute a Fe2OG dioxygenase domain. Fe cation contacts are provided by histidine 175, aspartate 177, and histidine 232.

Belongs to the iron/ascorbate-dependent oxidoreductase family. It depends on Fe cation as a cofactor.

The catalysed reaction is 1-aminocyclopropane-1-carboxylate + L-ascorbate + O2 = ethene + L-dehydroascorbate + hydrogen cyanide + CO2 + 2 H2O. Its pathway is alkene biosynthesis; ethylene biosynthesis via S-adenosyl-L-methionine; ethylene from S-adenosyl-L-methionine: step 2/2. The protein is 1-aminocyclopropane-1-carboxylate oxidase (ACO) of Dendrobium crumenatum (Tropical pigeon orchid).